The sequence spans 36 residues: Beta-amanitin proprotein (36 aa).

Positions 1–10 are excised as a propeptide; it reads MSDINATRLP. The segment at residues 11 to 18 is a cross-link (cyclopeptide (Ile-Pro)); that stretch reads IWGIGCDP. The 2'-cysteinyl-6'-hydroxytryptophan sulfoxide (Trp-Cys) cross-link spans 12–16; sequence WGIGC. A propeptide spanning residues 19–36 is cleaved from the precursor; the sequence is CIGDDVTALLTRGEASLC.

The protein belongs to the MSDIN fungal toxin family. Processed by the macrocyclase-peptidase enzyme POPB to yield a toxic cyclic decapeptide. POPB first removes 10 residues from the N-terminus. Conformational trapping of the remaining peptide forces the enzyme to release this intermediate rather than proceed to macrocyclization. The enzyme rebinds the remaining peptide in a different conformation and catalyzes macrocyclization of the N-terminal 8 residues.

Functionally, toxin belonging to the bicyclic octapeptides amatoxins that acts by binding non-competitively to RNA polymerase II and greatly slowing the elongation of transcripts from target promoters. The protein is Beta-amanitin proprotein of Amanita phalloides (Death cap).